The following is a 212-amino-acid chain: Large ribosomal subunit protein uL3 (212 aa).

Over residues 140 to 155 (SVSHRAIGSTGQNQSP) the composition is skewed to polar residues. Positions 140 to 166 (SVSHRAIGSTGQNQSPGKVFKGKKMPG) are disordered. N5-methylglutamine is present on glutamine 153.

It belongs to the universal ribosomal protein uL3 family. Part of the 50S ribosomal subunit. Forms a cluster with proteins L14 and L19. Methylated by PrmB.

Its function is as follows. One of the primary rRNA binding proteins, it binds directly near the 3'-end of the 23S rRNA, where it nucleates assembly of the 50S subunit. The chain is Large ribosomal subunit protein uL3 from Psychrobacter cryohalolentis (strain ATCC BAA-1226 / DSM 17306 / VKM B-2378 / K5).